Reading from the N-terminus, the 404-residue chain is Homocysteine-responsive endoplasmic reticulum-resident ubiquitin-like domain member 2 protein (404 aa).

Positions 10-89 (VTLIIKAPNQ…HMVHLVCASR (80 aa)) constitute a Ubiquitin-like domain. The interval 86–153 (CASRSPPSSP…TLSQAQTDPA (68 aa)) is disordered. 2 stretches are compositionally biased toward low complexity: residues 88-97 (SRSPPSSPKS) and 109-126 (SSTS…PSPS). Over residues 127-153 (QESLSLVTGSSEGLRQRTLSQAQTDPA) the composition is skewed to polar residues. Residues 301-321 (FIMVMGAMLLVYLHQAGWFPF) traverse the membrane as a helical segment.

It localises to the membrane. Functionally, could be involved in the unfolded protein response (UPR) pathway. The sequence is that of Homocysteine-responsive endoplasmic reticulum-resident ubiquitin-like domain member 2 protein (Herpud2) from Mus musculus (Mouse).